The following is an 874-amino-acid chain: Valine--tRNA ligase (874 aa).

A 'HIGH' region motif is present at residues proline 46 to histidine 56. Positions lysine 523–serine 527 match the 'KMSKS' region motif. Lysine 526 lines the ATP pocket. Positions aspartate 805–lysine 874 form a coiled coil.

The protein belongs to the class-I aminoacyl-tRNA synthetase family. ValS type 1 subfamily. Monomer.

It localises to the cytoplasm. It catalyses the reaction tRNA(Val) + L-valine + ATP = L-valyl-tRNA(Val) + AMP + diphosphate. Catalyzes the attachment of valine to tRNA(Val). As ValRS can inadvertently accommodate and process structurally similar amino acids such as threonine, to avoid such errors, it has a 'posttransfer' editing activity that hydrolyzes mischarged Thr-tRNA(Val) in a tRNA-dependent manner. The polypeptide is Valine--tRNA ligase (Ureaplasma parvum serovar 3 (strain ATCC 700970)).